A 611-amino-acid polypeptide reads, in one-letter code: L-tyrosine decarboxylase (611 aa).

Pyridoxal 5'-phosphate contacts are provided by residues 151-152 (GS), Thr-292, and 382-384 (DPH). Lys-385 is modified (N6-(pyridoxal phosphate)lysine). The active-site Proton donor is Tyr-413. Ser-433 is a pyridoxal 5'-phosphate binding site.

Belongs to the group II decarboxylase family. Tyrosine decarboxylase subfamily. As to quaternary structure, homodimer. Requires pyridoxal 5'-phosphate as cofactor.

The catalysed reaction is L-tyrosine + H(+) = tyramine + CO2. It catalyses the reaction L-dopa + H(+) = dopamine + CO2. It functions in the pathway amino-acid metabolism. With respect to regulation, levodopa decarboxylation is not inhibited by carbidopa, benserazide, and methyldopa, that are three human L-dopa decarboxylase inhibitors. In terms of biological role, catalyzes the decarboxylation of L-tyrosine to produce tyramine. Plays a role in acid resistance since tyramine production via tyrosine decarboxylation appears to provide a cytosolic pH maintenance mechanism that helps the bacterium cope with acid stress such as that encountered in gastrointestinal tract (GIT) environments. Therefore, may contribute to the colonization of the human GIT by E.faecium. Functionally, also involved in drug metabolism, being able to catalyze decarboxylation of levodopa (L-dopa) to dopamine. In gut microbiota this enzyme is in fact exclusively responsible for the decarboxylation of levodopa, and thus reduces in situ levels of levodopa in the treatment of Parkinson's disease. It was shown that abundance of bacterial tyrosine decarboxylase in the proximal small intestine - the primary site of levodopa absorption - contributes to interindividual variation in drug efficacy and can explain the requirement for an increased dosage regimen of levodopa treatment in Parkinson's disease patients. The chain is L-tyrosine decarboxylase from Enterococcus faecium (Streptococcus faecium).